Here is a 363-residue protein sequence, read N- to C-terminus: Dihydroorotate dehydrogenase (quinone) (363 aa).

FMN is bound by residues 67–71 (AGYDK) and Thr91. A substrate-binding site is contributed by Lys71. 116–120 (NRMGF) contacts substrate. 2 residues coordinate FMN: Asn145 and Asn178. A substrate-binding site is contributed by Asn178. The active-site Nucleophile is the Ser181. Asn183 contributes to the substrate binding site. The FMN site is built by Lys224 and Thr254. 255–256 (NT) lines the substrate pocket. FMN is bound by residues Gly275, Gly304, and 325-326 (YS).

Belongs to the dihydroorotate dehydrogenase family. Type 2 subfamily. Monomer. The cofactor is FMN.

It localises to the cell membrane. It carries out the reaction (S)-dihydroorotate + a quinone = orotate + a quinol. It functions in the pathway pyrimidine metabolism; UMP biosynthesis via de novo pathway; orotate from (S)-dihydroorotate (quinone route): step 1/1. Functionally, catalyzes the conversion of dihydroorotate to orotate with quinone as electron acceptor. The chain is Dihydroorotate dehydrogenase (quinone) from Acidithiobacillus ferrooxidans (strain ATCC 23270 / DSM 14882 / CIP 104768 / NCIMB 8455) (Ferrobacillus ferrooxidans (strain ATCC 23270)).